A 316-amino-acid chain; its full sequence is Transaldolase (316 aa).

The active-site Schiff-base intermediate with substrate is the lysine 132.

The protein belongs to the transaldolase family. Type 1 subfamily. In terms of assembly, homodimer.

It is found in the cytoplasm. The enzyme catalyses D-sedoheptulose 7-phosphate + D-glyceraldehyde 3-phosphate = D-erythrose 4-phosphate + beta-D-fructose 6-phosphate. The protein operates within carbohydrate degradation; pentose phosphate pathway; D-glyceraldehyde 3-phosphate and beta-D-fructose 6-phosphate from D-ribose 5-phosphate and D-xylulose 5-phosphate (non-oxidative stage): step 2/3. Transaldolase is important for the balance of metabolites in the pentose-phosphate pathway. The protein is Transaldolase of Vibrio campbellii (strain ATCC BAA-1116).